Consider the following 37-residue polypeptide: Large ribosomal subunit protein bL36 (37 aa).

This sequence belongs to the bacterial ribosomal protein bL36 family.

In Desulforapulum autotrophicum (strain ATCC 43914 / DSM 3382 / VKM B-1955 / HRM2) (Desulfobacterium autotrophicum), this protein is Large ribosomal subunit protein bL36.